Here is a 409-residue protein sequence, read N- to C-terminus: Tryptophan synthase beta chain (409 aa).

Lysine 104 is modified (N6-(pyridoxal phosphate)lysine).

This sequence belongs to the TrpB family. As to quaternary structure, tetramer of two alpha and two beta chains. The cofactor is pyridoxal 5'-phosphate.

The catalysed reaction is (1S,2R)-1-C-(indol-3-yl)glycerol 3-phosphate + L-serine = D-glyceraldehyde 3-phosphate + L-tryptophan + H2O. It participates in amino-acid biosynthesis; L-tryptophan biosynthesis; L-tryptophan from chorismate: step 5/5. The beta subunit is responsible for the synthesis of L-tryptophan from indole and L-serine. In Trichodesmium erythraeum (strain IMS101), this protein is Tryptophan synthase beta chain.